A 313-amino-acid polypeptide reads, in one-letter code: MLDNVLRIATRQSPLALWQAHYVKDKLMASHPGLVVELVPMVTRGDVILDTPLAKVGGKGLFVKELEVALLENRADIAVHSMKDVPVEFPQGLGLVTICEREDPRDAFVSNNYDSLDALPAGSIVGTSSLRRQCQLAERRPDLIIRSLRGNVGTRLSKLDNGEYDAIILAVAGLKRLGLESRIRAALPPEISLPAVGQGAVGIECRLDDSRTRELLAALNHHETALRVTAERAMNTRLEGGCQVPIGSYAELIDGEIWLRALVGAPDGSQIIRGERRGAPQDAEQMGISLAEELLNNGAREILAEVYNGDAPA.

C242 is subject to S-(dipyrrolylmethanemethyl)cysteine.

This sequence belongs to the HMBS family. Monomer. Dipyrromethane serves as cofactor.

The enzyme catalyses 4 porphobilinogen + H2O = hydroxymethylbilane + 4 NH4(+). It participates in porphyrin-containing compound metabolism; protoporphyrin-IX biosynthesis; coproporphyrinogen-III from 5-aminolevulinate: step 2/4. Tetrapolymerization of the monopyrrole PBG into the hydroxymethylbilane pre-uroporphyrinogen in several discrete steps. In Escherichia coli (strain K12 / MC4100 / BW2952), this protein is Porphobilinogen deaminase.